A 423-amino-acid chain; its full sequence is UDP-N-acetylglucosamine 1-carboxyvinyltransferase 1 (423 aa).

Residue 23 to 24 (KN) participates in phosphoenolpyruvate binding. Residue Arg96 participates in UDP-N-acetyl-alpha-D-glucosamine binding. The active-site Proton donor is Cys120. Cys120 bears the 2-(S-cysteinyl)pyruvic acid O-phosphothioketal mark. Residues Asp309 and Val331 each contribute to the UDP-N-acetyl-alpha-D-glucosamine site.

The protein belongs to the EPSP synthase family. MurA subfamily.

The protein localises to the cytoplasm. It carries out the reaction phosphoenolpyruvate + UDP-N-acetyl-alpha-D-glucosamine = UDP-N-acetyl-3-O-(1-carboxyvinyl)-alpha-D-glucosamine + phosphate. It participates in cell wall biogenesis; peptidoglycan biosynthesis. Functionally, cell wall formation. Adds enolpyruvyl to UDP-N-acetylglucosamine. The polypeptide is UDP-N-acetylglucosamine 1-carboxyvinyltransferase 1 (Streptococcus pyogenes serotype M3 (strain ATCC BAA-595 / MGAS315)).